The primary structure comprises 242 residues: Uridylate kinase (242 aa).

An ATP-binding site is contributed by 12 to 15 (KLSG). Residues 20–25 (GNDGFG) are involved in allosteric activation by GTP. Residue glycine 54 participates in UMP binding. Positions 55 and 59 each coordinate ATP. Residues aspartate 74 and 135 to 142 (TGNPYFST) each bind UMP. Asparagine 163, tyrosine 169, and aspartate 172 together coordinate ATP.

The protein belongs to the UMP kinase family. In terms of assembly, homohexamer.

Its subcellular location is the cytoplasm. The catalysed reaction is UMP + ATP = UDP + ADP. It functions in the pathway pyrimidine metabolism; CTP biosynthesis via de novo pathway; UDP from UMP (UMPK route): step 1/1. Allosterically activated by GTP. Inhibited by UTP. Functionally, catalyzes the reversible phosphorylation of UMP to UDP. The chain is Uridylate kinase from Listeria innocua serovar 6a (strain ATCC BAA-680 / CLIP 11262).